We begin with the raw amino-acid sequence, 403 residues long: Phosphoglycerate kinase (403 aa).

Substrate-binding positions include 24–26, Arg-39, 62–65, Arg-121, and Arg-161; these read DLN and HLGR. ATP is bound by residues Lys-211, Gly-299, Glu-330, and 359–362; that span reads GGDS.

This sequence belongs to the phosphoglycerate kinase family. In terms of assembly, monomer.

Its subcellular location is the cytoplasm. It catalyses the reaction (2R)-3-phosphoglycerate + ATP = (2R)-3-phospho-glyceroyl phosphate + ADP. It participates in carbohydrate degradation; glycolysis; pyruvate from D-glyceraldehyde 3-phosphate: step 2/5. The protein is Phosphoglycerate kinase of Corynebacterium jeikeium (strain K411).